A 295-amino-acid chain; its full sequence is 33 kDa chaperonin (295 aa).

Intrachain disulfides connect Cys236-Cys238 and Cys269-Cys272.

It belongs to the HSP33 family. Post-translationally, under oxidizing conditions two disulfide bonds are formed involving the reactive cysteines. Under reducing conditions zinc is bound to the reactive cysteines and the protein is inactive.

Its subcellular location is the cytoplasm. Functionally, redox regulated molecular chaperone. Protects both thermally unfolding and oxidatively damaged proteins from irreversible aggregation. Plays an important role in the bacterial defense system toward oxidative stress. This chain is 33 kDa chaperonin, found in Geobacter sp. (strain M21).